The following is a 106-amino-acid chain: uncharacterized protein (106 aa).

The chain crosses the membrane as a helical span at residues 78–98 (LAITGYVVSIPIVLPILIIFI).

Its subcellular location is the membrane. This is an uncharacterized protein from Haemophilus influenzae (strain ATCC 51907 / DSM 11121 / KW20 / Rd).